A 73-amino-acid polypeptide reads, in one-letter code: Translation initiation factor IF-1 (73 aa).

In terms of domain architecture, S1-like spans 1 to 73 (MDIKEEAIET…TKGRIVYREK (73 aa)).

It belongs to the IF-1 family. As to quaternary structure, component of the 30S ribosomal translation pre-initiation complex which assembles on the 30S ribosome in the order IF-2 and IF-3, IF-1 and N-formylmethionyl-tRNA(fMet); mRNA recruitment can occur at any time during PIC assembly.

It localises to the cytoplasm. Its function is as follows. One of the essential components for the initiation of protein synthesis. Stabilizes the binding of IF-2 and IF-3 on the 30S subunit to which N-formylmethionyl-tRNA(fMet) subsequently binds. Helps modulate mRNA selection, yielding the 30S pre-initiation complex (PIC). Upon addition of the 50S ribosomal subunit IF-1, IF-2 and IF-3 are released leaving the mature 70S translation initiation complex. This is Translation initiation factor IF-1 from Borreliella afzelii (strain PKo) (Borrelia afzelii).